The sequence spans 230 residues: Uracil-DNA glycosylase (230 aa).

Aspartate 70 (proton acceptor) is an active-site residue.

It belongs to the uracil-DNA glycosylase (UDG) superfamily. UNG family.

It is found in the cytoplasm. It carries out the reaction Hydrolyzes single-stranded DNA or mismatched double-stranded DNA and polynucleotides, releasing free uracil.. Functionally, excises uracil residues from the DNA which can arise as a result of misincorporation of dUMP residues by DNA polymerase or due to deamination of cytosine. This Campylobacter concisus (strain 13826) protein is Uracil-DNA glycosylase.